The chain runs to 395 residues: Formate-dependent phosphoribosylglycinamide formyltransferase (395 aa).

N(1)-(5-phospho-beta-D-ribosyl)glycinamide is bound by residues 22 to 23 (EL) and Glu82. Residues Arg115, Lys156, 161–166 (SSGKGQ), 196–199 (EGFI), and Glu204 contribute to the ATP site. One can recognise an ATP-grasp domain in the interval 120–309 (RLAAETLGLP…EFALHARAIL (190 aa)). Glu268 and Glu280 together coordinate Mg(2+). N(1)-(5-phospho-beta-D-ribosyl)glycinamide is bound by residues Asp287, Lys356, and 363 to 364 (RR).

This sequence belongs to the PurK/PurT family. Homodimer.

The enzyme catalyses N(1)-(5-phospho-beta-D-ribosyl)glycinamide + formate + ATP = N(2)-formyl-N(1)-(5-phospho-beta-D-ribosyl)glycinamide + ADP + phosphate + H(+). It participates in purine metabolism; IMP biosynthesis via de novo pathway; N(2)-formyl-N(1)-(5-phospho-D-ribosyl)glycinamide from N(1)-(5-phospho-D-ribosyl)glycinamide (formate route): step 1/1. Involved in the de novo purine biosynthesis. Catalyzes the transfer of formate to 5-phospho-ribosyl-glycinamide (GAR), producing 5-phospho-ribosyl-N-formylglycinamide (FGAR). Formate is provided by PurU via hydrolysis of 10-formyl-tetrahydrofolate. The protein is Formate-dependent phosphoribosylglycinamide formyltransferase of Stenotrophomonas maltophilia (strain K279a).